The primary structure comprises 394 residues: Probable alginate O-acetylase AlgJ (394 aa).

The signal sequence occupies residues 1 to 37; sequence MTRSLRVLYIGLFLVLLLALGAWSLRSFFGFSTNADA. Residue Asp191 is part of the active site. His193 (proton acceptor) is an active-site residue. Ser287 (nucleophile) is an active-site residue.

It belongs to the AlgJ family.

It localises to the cell inner membrane. Its subcellular location is the periplasm. The protein operates within glycan biosynthesis; alginate biosynthesis. In terms of biological role, together with AlgI and AlgF, forms an inner membrane complex which probably interacts with the alginate polymerization-transport complex and adds acetyl groups at the O-2 and O-3 positions of mannuronate residues. Acetylation of alginate is important for the architecture of biofilms and increases the ability of alginate to act as a defense barrier. In Pseudomonas fluorescens, this protein is Probable alginate O-acetylase AlgJ (algJ).